We begin with the raw amino-acid sequence, 423 residues long: Deferrochelatase (423 aa).

The tat-type signal signal peptide spans 1 to 35 (MQYKDENGVNEPSRRRLLKVIGALALAGSCPVAHA). Residue 236–238 (GTA) coordinates heme b. Protoporphyrin IX is bound by residues 236 to 238 (GTA) and arginine 296. Heme b-binding positions include histidine 329, 334–336 (NPR), and arginine 347.

As to quaternary structure, homodimer. Part of a ferrous iron transporter composed of EfeU, EfeO and EfeB. However, this EfeUOB tripartite iron transporter is defective in E.coli strain K12 due to a frameshift mutation in EfeU. Requires heme b as cofactor. In terms of processing, exported by the Tat system. The position of the signal peptide cleavage has been experimentally proven. Can also be exported by the Sec system.

The protein localises to the periplasm. The catalysed reaction is heme b + 2 H(+) = protoporphyrin IX + Fe(2+). Its function is as follows. Involved in the recovery of exogenous heme iron. Extracts iron from heme while preserving the protoporphyrin ring intact. Also displays peroxidase activity on guaiacol in vitro. In Escherichia coli (strain K12), this protein is Deferrochelatase (efeB).